A 77-amino-acid polypeptide reads, in one-letter code: UPF0248 protein Pcal_0252 (77 aa).

This sequence belongs to the UPF0248 family.

The polypeptide is UPF0248 protein Pcal_0252 (Pyrobaculum calidifontis (strain DSM 21063 / JCM 11548 / VA1)).